The primary structure comprises 450 residues: Phosphoglucosamine mutase (450 aa).

The active-site Phosphoserine intermediate is serine 102. Residues serine 102, aspartate 243, aspartate 245, and aspartate 247 each contribute to the Mg(2+) site. Serine 102 bears the Phosphoserine mark.

The protein belongs to the phosphohexose mutase family. Mg(2+) serves as cofactor. Activated by phosphorylation.

It carries out the reaction alpha-D-glucosamine 1-phosphate = D-glucosamine 6-phosphate. Catalyzes the conversion of glucosamine-6-phosphate to glucosamine-1-phosphate. The protein is Phosphoglucosamine mutase of Rhizobium leguminosarum bv. trifolii (strain WSM2304).